The sequence spans 146 residues: Large ribosomal subunit protein uL15 (146 aa).

The disordered stretch occupies residues 1 to 51; it reads MQLNTIKPAEGSKKNRRHVGRGIGSGLGKTAGRGHKGQKSRSGGFHKVGFE. Over residues 21–31 the composition is skewed to gly residues; it reads RGIGSGLGKTA.

Belongs to the universal ribosomal protein uL15 family. As to quaternary structure, part of the 50S ribosomal subunit.

In terms of biological role, binds to the 23S rRNA. The sequence is that of Large ribosomal subunit protein uL15 from Polynucleobacter necessarius subsp. necessarius (strain STIR1).